The chain runs to 97 residues: ESAT-6-like protein EsxS (97 aa).

It belongs to the WXG100 family. CFP-10 subfamily. In terms of assembly, forms a tight complex with EsxR. Exists in heterodimeric and heterotetrameric forms.

It localises to the secreted. This Mycobacterium tuberculosis (strain ATCC 25618 / H37Rv) protein is ESAT-6-like protein EsxS.